A 189-amino-acid chain; its full sequence is GMP synthase [glutamine-hydrolyzing] subunit A (189 aa).

Residues 3–187 (RIDVIDNHGQ…LSVCDQQSVA (185 aa)) enclose the Glutamine amidotransferase type-1 domain. The Nucleophile role is filled by Cys-73. Catalysis depends on residues His-161 and Glu-163.

Heterodimer composed of a glutamine amidotransferase subunit (A) and a GMP-binding subunit (B).

The enzyme catalyses XMP + L-glutamine + ATP + H2O = GMP + L-glutamate + AMP + diphosphate + 2 H(+). The protein operates within purine metabolism; GMP biosynthesis; GMP from XMP (L-Gln route): step 1/1. In terms of biological role, catalyzes the synthesis of GMP from XMP. The chain is GMP synthase [glutamine-hydrolyzing] subunit A from Haloarcula marismortui (strain ATCC 43049 / DSM 3752 / JCM 8966 / VKM B-1809) (Halobacterium marismortui).